The primary structure comprises 126 residues: MKNLFIFLSLMMMFVLTACGGSKYDDAIDDVISQYKEHKGNDTEINIKRENAIVRVYEGGKYIQFAFYMPDNSSRELTTFKYYEKFGDKYEKMTDMPGNGENDRLGLSKKTPDYEEVKGEETELEE.

The signal sequence occupies residues 1-27 (MKNLFIFLSLMMMFVLTACGGSKYDDA). The tract at residues 93–126 (MTDMPGNGENDRLGLSKKTPDYEEVKGEETELEE) is disordered. Positions 101–126 (ENDRLGLSKKTPDYEEVKGEETELEE) are enriched in basic and acidic residues.

This is an uncharacterized protein from Bacillus subtilis (strain 168).